A 408-amino-acid polypeptide reads, in one-letter code: UDP-N-acetylglucosamine--N-acetylmuramyl-(pentapeptide) pyrophosphoryl-undecaprenol N-acetylglucosamine transferase (408 aa).

The segment at 1–20 is disordered; the sequence is MNDTVKKPTGGRGDDPLPAG. UDP-N-acetyl-alpha-D-glucosamine contacts are provided by residues 41-43, Asn160, Arg197, Ser231, and Gln327; that span reads TAG.

This sequence belongs to the glycosyltransferase 28 family. MurG subfamily.

Its subcellular location is the cell membrane. It catalyses the reaction di-trans,octa-cis-undecaprenyl diphospho-N-acetyl-alpha-D-muramoyl-L-alanyl-D-glutamyl-meso-2,6-diaminopimeloyl-D-alanyl-D-alanine + UDP-N-acetyl-alpha-D-glucosamine = di-trans,octa-cis-undecaprenyl diphospho-[N-acetyl-alpha-D-glucosaminyl-(1-&gt;4)]-N-acetyl-alpha-D-muramoyl-L-alanyl-D-glutamyl-meso-2,6-diaminopimeloyl-D-alanyl-D-alanine + UDP + H(+). It participates in cell wall biogenesis; peptidoglycan biosynthesis. Functionally, cell wall formation. Catalyzes the transfer of a GlcNAc subunit on undecaprenyl-pyrophosphoryl-MurNAc-pentapeptide (lipid intermediate I) to form undecaprenyl-pyrophosphoryl-MurNAc-(pentapeptide)GlcNAc (lipid intermediate II). In Mycobacterium avium (strain 104), this protein is UDP-N-acetylglucosamine--N-acetylmuramyl-(pentapeptide) pyrophosphoryl-undecaprenol N-acetylglucosamine transferase.